Consider the following 220-residue polypeptide: Glutathione S-transferase-like protein FUS3 (220 aa).

The 82-residue stretch at 3 to 84 folds into the GST N-terminal domain; that stretch reads SFGTLYTYMP…YVAQSGPQAS (82 aa). Residues 90-220 form the GST C-terminal domain; that stretch reads DAMSSAKIRQ…LIEKRRIGAK (131 aa).

It belongs to the GST superfamily.

Glutathione S-transferase-like protein; part of the gene cluster that mediates the biosynthesis of the mycotoxin fusarin C. Within the cluster, FUS1, FUS2, FUS8 and FUS9 are sufficient for fusarin production. The other FUS cluster members are not essential for fusarin C biosynthesis. This is Glutathione S-transferase-like protein FUS3 from Gibberella moniliformis (strain M3125 / FGSC 7600) (Maize ear and stalk rot fungus).